The sequence spans 388 residues: Succinate--CoA ligase [ADP-forming] subunit beta (388 aa).

The region spanning 9–245 (KELLASYGLP…KSQENERELK (237 aa)) is the ATP-grasp domain. ATP is bound by residues lysine 46, 53-55 (GRG), glutamate 100, tyrosine 103, and glutamate 108. 2 residues coordinate Mg(2+): asparagine 200 and aspartate 214. Substrate is bound by residues asparagine 265 and 322–324 (GIV).

The protein belongs to the succinate/malate CoA ligase beta subunit family. As to quaternary structure, heterotetramer of two alpha and two beta subunits. It depends on Mg(2+) as a cofactor.

It catalyses the reaction succinate + ATP + CoA = succinyl-CoA + ADP + phosphate. The catalysed reaction is GTP + succinate + CoA = succinyl-CoA + GDP + phosphate. Its pathway is carbohydrate metabolism; tricarboxylic acid cycle; succinate from succinyl-CoA (ligase route): step 1/1. Functionally, succinyl-CoA synthetase functions in the citric acid cycle (TCA), coupling the hydrolysis of succinyl-CoA to the synthesis of either ATP or GTP and thus represents the only step of substrate-level phosphorylation in the TCA. The beta subunit provides nucleotide specificity of the enzyme and binds the substrate succinate, while the binding sites for coenzyme A and phosphate are found in the alpha subunit. In Neisseria gonorrhoeae (strain ATCC 700825 / FA 1090), this protein is Succinate--CoA ligase [ADP-forming] subunit beta.